A 332-amino-acid polypeptide reads, in one-letter code: MSDTITTRTYSADAKSRDVRPRESERDETQQDETQVCPECSGHLVTDEEHGETICEDCGLVVEDTVVDRGPEWRAFDSAERDSKSRVGAPTTKMMHDKGLSTNIGWQNKDAYGKSLSPRQREQMQRLRTWNERFRTRDSKERNLKQALGEIDRMASALGLPENVRETASVIYRRALNDDLLPGRSIEGVATSALYASARMAGTPRSLDELEKVSRVDKMELTRTYRYIVRELKLEIKPADPEQYVPRFASELGLSDEAERQARQLLRDAKETGIHSGKSPVGLAAAAVYAAALLTNEKVTQSEVSTVADISEVTIRNRYKELLEVQDGTLLA.

Over residues 1–10 the composition is skewed to polar residues; that stretch reads MSDTITTRTY. Residues 1 to 36 form a disordered region; it reads MSDTITTRTYSADAKSRDVRPRESERDETQQDETQV. Basic and acidic residues predominate over residues 14–29; that stretch reads AKSRDVRPRESERDET. The segment at 33–63 adopts a TFIIB-type zinc-finger fold; that stretch reads ETQVCPECSGHLVTDEEHGETICEDCGLVVE. Zn(2+)-binding residues include cysteine 37, cysteine 40, cysteine 55, and cysteine 58. Residues 77–106 are disordered; sequence DSAERDSKSRVGAPTTKMMHDKGLSTNIGW. Tandem repeats lie at residues 149 to 232 and 243 to 324.

This sequence belongs to the TFIIB family.

In terms of biological role, stabilizes TBP binding to an archaeal box-A promoter. Also responsible for recruiting RNA polymerase II to the pre-initiation complex (DNA-TBP-TFIIB). This is Transcription initiation factor IIB 2 from Haloferax volcanii (strain ATCC 29605 / DSM 3757 / JCM 8879 / NBRC 14742 / NCIMB 2012 / VKM B-1768 / DS2) (Halobacterium volcanii).